Here is a 365-residue protein sequence, read N- to C-terminus: Virion host shutoff protein (365 aa).

Belongs to the herpesviridae VHS protein family.

It localises to the virion. Its function is as follows. Minor structural protein that acts as an endoribonuclease during lytic infection. Degrades host mRNAs in the cytoplasm by cutting them at preferred sites, including some in regions of translation initiation. This is Virion host shutoff protein (VHS) from Sus scrofa (Pig).